Consider the following 938-residue polypeptide: Glutamate receptor 3.1 (938 aa).

Residues 1–20 form the signal peptide; that stretch reads MKFIFYLFSIFCCLCSCAQS. Residues 21-588 lie on the Extracellular side of the membrane; the sequence is QNISGRPDAV…GGWAFLQPFT (568 aa). Residues Asn22, Asn39, Asn59, Asn340, Asn418, Asn436, and Asn551 are each glycosylated (N-linked (GlcNAc...) asparagine). Residues 589–609 traverse the membrane as a helical segment; it reads IKMWTVTGLFFLIIGTVVWML. Residues 610 to 618 are Cytoplasmic-facing; the sequence is EHRINDEFR. The chain crosses the membrane as a helical span at residues 619-639; sequence GPPAKQLITVFWFSFSTLFFA. Residues 640–650 are Cytoplasmic-facing; it reads HREDTRSTLGR. Residues 651-671 traverse the membrane as a helical segment; sequence FVIIIWLFVVLIIQSSYTASL. The Extracellular portion of the chain corresponds to 672-830; sequence TSILTVQQLT…ELDQDPDRLD (159 aa). Residues 831–851 form a helical membrane-spanning segment; it reads VYSFSALFLICGLACIFALAI. At 852–938 the chain is on the cytoplasmic side; the sequence is HACNLFYQYS…SGSGSTTASC (87 aa). The segment at 906–938 is disordered; that stretch reads AAKEKASGLGGSGGSMSGVSFTSSGSGSTTASC. The span at 922–938 shows a compositional bias: low complexity; the sequence is SGVSFTSSGSGSTTASC.

It belongs to the glutamate-gated ion channel (TC 1.A.10.1) family. In terms of assembly, may form homomultimers. In terms of tissue distribution, expressed at low levels in roots and leaves.

It localises to the membrane. In terms of biological role, glutamate-gated receptor that probably acts as a non-selective cation channel. Involved in root development. May regulate cell proliferation and cell death in the root apex. The sequence is that of Glutamate receptor 3.1 (GLR3.1) from Oryza sativa subsp. japonica (Rice).